Reading from the N-terminus, the 367-residue chain is MSITSLLQQTTLLPEHYRALSITEMESRILSIKKKLGSKLFIPGHHYQKDEVIQFADATGDSLQLAQLSAANKEAEHIVFCGVHFMAETADMLTSKRQHVYLPDMRAGCSMADMADIYQTEQAWPILQQLFGDTITPLTYVNSTAAIKAFTGRHGGACVTSSNAKELVQWAFTQKQRIFFLPDQHLGRNTAYDLGVPLENMAVWNPHKNILETKQPIENIQVILWKGHCSVHEGFTVQHTETVRKEYPSMRIIVHPECSREVVDAADDAGSTKYIIDTINQAPSGSAWAIGTEMNLVNRIIKQHPDKQIISLNENFCPCLTMNRIDLPHLLWCLESIDHGQPHNRIQVDDHTSKEALSSLERMLARR.

Positions 45 and 62 each coordinate iminosuccinate. Cysteine 109 provides a ligand contact to [4Fe-4S] cluster. Iminosuccinate contacts are provided by residues 140–142 and serine 161; that span reads YVN. Cysteine 229 provides a ligand contact to [4Fe-4S] cluster. Iminosuccinate is bound by residues 255-257 and threonine 272; that span reads HPE. Cysteine 319 contributes to the [4Fe-4S] cluster binding site.

It belongs to the quinolinate synthase family. Type 3 subfamily. [4Fe-4S] cluster is required as a cofactor.

Its subcellular location is the cytoplasm. It catalyses the reaction iminosuccinate + dihydroxyacetone phosphate = quinolinate + phosphate + 2 H2O + H(+). Its pathway is cofactor biosynthesis; NAD(+) biosynthesis; quinolinate from iminoaspartate: step 1/1. Functionally, catalyzes the condensation of iminoaspartate with dihydroxyacetone phosphate to form quinolinate. The polypeptide is Quinolinate synthase (Lysinibacillus sphaericus (strain C3-41)).